Reading from the N-terminus, the 443-residue chain is GTPase Der (443 aa).

EngA-type G domains follow at residues 3-167 (PVIA…PEEK) and 176-349 (IKIA…QSIQ). GTP contacts are provided by residues 9–16 (GRPNVGKS), 56–60 (DTGGL), 119–122 (NKAD), 182–189 (GRPNVGKS), 229–233 (DTAGI), and 294–297 (NKWD). One can recognise a KH-like domain in the interval 350–434 (QELTTGQLTR…PVHIKLKTDP (85 aa)).

It belongs to the TRAFAC class TrmE-Era-EngA-EngB-Septin-like GTPase superfamily. EngA (Der) GTPase family. Associates with the 50S ribosomal subunit.

In terms of biological role, GTPase that plays an essential role in the late steps of ribosome biogenesis. This Coxiella burnetii (strain CbuG_Q212) (Coxiella burnetii (strain Q212)) protein is GTPase Der.